Here is a 442-residue protein sequence, read N- to C-terminus: Tyrosine--tRNA ligase (442 aa).

Tyrosine 55 lines the L-tyrosine pocket. Positions 60–69 match the 'HIGH' region motif; that stretch reads PTAPSLHLGN. Positions 190 and 194 each coordinate L-tyrosine. Residues 250 to 254 carry the 'KMSKS' region motif; the sequence is KFGKS. Lysine 253 serves as a coordination point for ATP. The region spanning 373–438 is the S4 RNA-binding domain; the sequence is VAIAQALVDT…GKKTLAGVFV (66 aa).

The protein belongs to the class-I aminoacyl-tRNA synthetase family. TyrS type 1 subfamily. As to quaternary structure, homodimer.

Its subcellular location is the cytoplasm. It catalyses the reaction tRNA(Tyr) + L-tyrosine + ATP = L-tyrosyl-tRNA(Tyr) + AMP + diphosphate + H(+). Catalyzes the attachment of tyrosine to tRNA(Tyr) in a two-step reaction: tyrosine is first activated by ATP to form Tyr-AMP and then transferred to the acceptor end of tRNA(Tyr). This is Tyrosine--tRNA ligase from Leifsonia xyli subsp. xyli (strain CTCB07).